The following is a 578-amino-acid chain: Protein BONZAI 1 (578 aa).

The N-myristoyl glycine moiety is linked to residue glycine 2. 2 C2 domains span residues 26-163 and 176-303; these read ALGA…TSTL and QPHH…NFSL. The Ca(2+) site is built by aspartate 63, aspartate 69, aspartate 122, and aspartate 124. One can recognise a VWFA domain in the interval 341-560; the sequence is NFMVAIDFTA…SVVQALLAEL (220 aa).

It belongs to the copine family. Interacts (via VWA domain) with BAP1 and BAP2. Interacts with HSP70-1 and HSP70-2. It depends on Ca(2+) as a cofactor. Post-translationally, based on mass spectrometry analysis, the N-peptide must be modified and there might be additional modifications other than myristoylation. Expressed in roots and flowers and, at higher levels, in leaves and stems. Strongly expressed in growing tissues. Not detected in green siliques.

The protein resides in the cell membrane. In terms of biological role, negative regulator of cell death and defense responses. Negative regulator of several R genes, including SNC1. May have effects in promoting growth and development. May function in membrane trafficking and in fusion of vesicles with plasma membrane at low temperature. Exhibits calcium-dependent phospholipid binding properties. The polypeptide is Protein BONZAI 1 (BON1) (Arabidopsis thaliana (Mouse-ear cress)).